Here is a 394-residue protein sequence, read N- to C-terminus: Acetate kinase (394 aa).

A Mg(2+)-binding site is contributed by Asn-7. Lys-14 lines the ATP pocket. Substrate is bound at residue Arg-88. Asp-145 (proton donor/acceptor) is an active-site residue. Residues 205–209, 279–281, and 327–331 contribute to the ATP site; these read HLGNG, DFR, and GIGEN. Glu-379 contacts Mg(2+).

It belongs to the acetokinase family. As to quaternary structure, homodimer. The cofactor is Mg(2+). It depends on Mn(2+) as a cofactor.

It localises to the cytoplasm. It catalyses the reaction acetate + ATP = acetyl phosphate + ADP. Its pathway is metabolic intermediate biosynthesis; acetyl-CoA biosynthesis; acetyl-CoA from acetate: step 1/2. Functionally, catalyzes the formation of acetyl phosphate from acetate and ATP. Can also catalyze the reverse reaction. The polypeptide is Acetate kinase (Campylobacter lari (strain RM2100 / D67 / ATCC BAA-1060)).